Reading from the N-terminus, the 347-residue chain is Protease HtpX homolog (347 aa).

4 helical membrane passes run Val-8–Ala-28, Ala-44–Val-64, Leu-76–Ala-96, and Ala-141–Thr-163. His-174 provides a ligand contact to Zn(2+). The active site involves Glu-175. His-178 provides a ligand contact to Zn(2+). Helical transmembrane passes span Ala-185 to Val-205 and Ile-221 to Leu-241. A Zn(2+)-binding site is contributed by Glu-248.

Belongs to the peptidase M48B family. Zn(2+) serves as cofactor.

Its subcellular location is the cell membrane. The sequence is that of Protease HtpX homolog from Pyrobaculum aerophilum (strain ATCC 51768 / DSM 7523 / JCM 9630 / CIP 104966 / NBRC 100827 / IM2).